A 339-amino-acid polypeptide reads, in one-letter code: Serpentine receptor class alpha-24 (339 aa).

Transmembrane regions (helical) follow at residues 26–46 (ITVK…YYFA), 65–82 (LILL…TTML), 112–132 (ELFV…SLAF), 151–171 (VSIF…YVGL), 199–219 (FRTL…YLSV), 248–268 (VCIL…GVNY), and 284–304 (LAPF…VIHC).

Belongs to the nematode receptor-like protein sra family.

Its subcellular location is the membrane. In Caenorhabditis elegans, this protein is Serpentine receptor class alpha-24 (sra-24).